A 57-amino-acid polypeptide reads, in one-letter code: Lantibiotic nukacin (57 aa).

Residues 1–30 (MENSKVMKDIEVANLLEEVQEDELNEVLGA) constitute a propeptide that is removed on maturation. The beta-methyllanthionine (Thr-Cys) cross-link spans 39–44 (TVSHDC). 2 consecutive cross-links (lanthionine (Ser-Cys)) follow at residues 41–55 (SHDCHMNSFQFVFTC) and 48–56 (SFQFVFTCC). A 2,3-didehydrobutyrine modification is found at Thr54.

Post-translationally, maturation of lantibiotics involves the enzymatic conversion of Thr, and Ser into dehydrated AA and the formation of thioether bonds with cysteine. This is followed by membrane translocation and cleavage of the modified precursor.

The protein localises to the secreted. Functionally, lanthionine-containing peptide antibiotic (lantibiotic) active on Gram-positive bacteria. The bactericidal activity of lantibiotics is based on depolarization of energized bacterial cytoplasmic membranes, initiated by the formation of aqueous transmembrane pores. In Staphylococcus simulans, this protein is Lantibiotic nukacin.